The following is an 864-amino-acid chain: MYMARCGPKNNVLCFPFQLSFLFSKRLINKRFKYTLQTEDEKDMMGSLSKNKIITPEDVEFKLAQLREFSNTLKERIHNTKSVNSDGHQSNSIAPISEDSRNVNVTKISSVPNEEKSKNLSDLIHSSFLEKMDHLVPKVIRERVADDDILAKNLFDRSHSNWAPVIDRLYVSEKRFMDIDSREFSVWLNGTVKYLPFHSILHLDEMLLEQINGDVVKFNTHMYECIFNNLGNLKPTNFNQDGTNDKVILKMKELLERYDKALKITEERINKKEGFPCKVPKMTQAILNNCLKYSTKCSSFHDMDYFITKFRDDYGITPNKQNLTTVIQFYSRKEMTKQAWNTFDTMKFLSTKHFPDICTYNTMLRICEKERNFPKALDLFQEIQDHNIKPTTNTYIMMARVLASSSSNAVVSEGKSDSLRLLGWKYLHELEDKNLYRHKKDDLNSFLAMMALAAFDGDIELSRALYYLFIAKKYKTLCANWKGNILVDQDTIWKSTLMPEMLNYLMLAYARFDPRNLPVLSGYEKGIELRRKFLREFDSSMRLDDTDKLVKFKLPFLPISDLNSEAQVLAESNAIWSFNLENGGTRNTLTSSNEAALEDIKKYRQLLDSFAQEAEDFNEFKFKVMYEVTKMQRESINVNVFNKISLHTYLSIPINLKQQKEFLRRLTFFTFQQHEFEAVIKRLYEGYRNIPSSHTRDQNSISTEAISVSKPETTEDLNLIMHDIWYITCLRHKIMMDTTLYELVMKAAIEFQNEDLAKKVWNDRGKFRTTVPFLKMDQRIRIAKDQKFAHLMVEFFTKQGKYSDAIAIILSSKNRFNWTYSMVRNLHKALEEIEDRNSVEILLDVVNKKSHAKALKWEEQELNM.

Residues 1-76 (MYMARCGPKN…REFSNTLKER (76 aa)) constitute a mitochondrion transit peptide. PPR repeat units lie at residues 319–353 (NKQN…STKH) and 356–390 (DICT…NIKP).

The protein belongs to the CCM1 family. In terms of assembly, binds to mitochondrial small subunit 15S rRNA.

The protein resides in the mitochondrion. Regulates mitochondrial small subunit maturation by controlling 15S rRNA 5'-end processing. Localizes to the 5' precursor of the 15S rRNA in a position that is subsequently occupied by mS47 in the mature yeast mtSSU. Uses structure and sequence-specific RNA recognition, binding to a single-stranded region of the precursor and specifically recognizing bases -6 to -1. The exchange of Ccm1 for mS47 is coupled to the irreversible removal of precursor rRNA that is accompanied by conformational changes of the mitoribosomal proteins uS5m and mS26. These conformational changes signal completion of 5'-end rRNA processing through protection of the mature 5'-end of the 15S rRNA and stabilization of mS47. The removal of the 5' precursor together with the dissociation of Ccm1 may be catalyzed by the 5'-3' exoribonuclease Pet127. Involved in the specific removal of group I introns in mitochondrial encoded transcripts. The chain is Mitochondrial 15S rRNA processing factor CCM1 (CCM1) from Saccharomyces cerevisiae (strain Lalvin EC1118 / Prise de mousse) (Baker's yeast).